A 203-amino-acid chain; its full sequence is Large ribosomal subunit protein eL15 (203 aa).

The disordered stretch occupies residues 166–203; it reads ATGKKSRGINKGHRYNNTRSGRRHTWKRQNTQSYWRYR. Positions 169 to 192 are enriched in basic residues; it reads KKSRGINKGHRYNNTRSGRRHTWK. A compositionally biased stretch (polar residues) spans 193 to 203; it reads RQNTQSYWRYR.

Belongs to the eukaryotic ribosomal protein eL15 family.

This Aspergillus niger protein is Large ribosomal subunit protein eL15 (rpl15).